The sequence spans 367 residues: Phosphoribosylaminoimidazole-succinocarboxamide synthase (367 aa).

It belongs to the SAICAR synthetase family.

It carries out the reaction 5-amino-1-(5-phospho-D-ribosyl)imidazole-4-carboxylate + L-aspartate + ATP = (2S)-2-[5-amino-1-(5-phospho-beta-D-ribosyl)imidazole-4-carboxamido]succinate + ADP + phosphate + 2 H(+). It participates in purine metabolism; IMP biosynthesis via de novo pathway; 5-amino-1-(5-phospho-D-ribosyl)imidazole-4-carboxamide from 5-amino-1-(5-phospho-D-ribosyl)imidazole-4-carboxylate: step 1/2. The chain is Phosphoribosylaminoimidazole-succinocarboxamide synthase from Vibrio vulnificus (strain CMCP6).